The following is a 306-amino-acid chain: MQTRSSSSPSANHRRETQLQIADPTSFCGKIMPGWTVVNRPRSSNNGVVDTYFIEPGTGRQFSSLEAIHRHLAGEVNDRRLTRAGSFFQDKTRVYEGSRTKQDHCGVEYASKGFRLPRGWSVEEVPRKNSHYIDKYYVERKTGKRFRSLVSVERYLRESRNSIEQQLRVLQNRRGHSKDFRLPDGWIVEEKPRRSSSHIDRSYIEPGTGNKFRSMAAVERYLISVGNITLDSVSMVHSERLPLLMNRNGIRFQSEVIDPNPPKKVKWVLTGSGGNMFTANVRGSNVSSLVKHTWSEAFVSLIEDRS.

Positions 1-11 (MQTRSSSSPSA) are enriched in polar residues. Positions 1–21 (MQTRSSSSPSANHRRETQLQI) are disordered. 3 MBD domains span residues 21–92 (IADP…QDKT), 106–171 (GVEY…RVLQ), and 172–242 (NRRG…ERLP). Arg-118, Arg-145, and Arg-174 each carry asymmetric dimethylarginine. The required for interaction with PRMT11 stretch occupies residues 163 to 306 (IEQQLRVLQN…AFVSLIEDRS (144 aa)).

Interacts with PRMT11. Interacts (via C-terminus) with IDM2, but not with IDM1. Interacts with IDM3. Part of a complex made of MBD7, IDM1, IDM2 and IDM3. Post-translationally, methylated by PRMT11. Expressed in leaves, buds, flowers, stems, siliques, mature seeds and roots.

It is found in the nucleus. The protein resides in the chromosome. Its function is as follows. Transcriptional regulator that binds CpG islands in promoters where the DNA is methylated at position 5 of cytosine within CpG dinucleotides. May directly affect chromatin structure by inducing intra- and inter- chromatin compaction via bridging over multiple methylated CpG sites. Acts as an anti-silencing factor that prevents DNA hypermethylation and gene repression. Requires high mCG density for binding. Recognizes preferentially mCGs located in transposable elements. Required for active DNA demethylation. Prefers to target genomic loci around chromocenters. The chain is Methyl-CpG-binding domain-containing protein 7 from Arabidopsis thaliana (Mouse-ear cress).